The chain runs to 390 residues: Methylthioribose-1-phosphate isomerase (390 aa).

Residues Arg-53–Ala-55, Arg-90, and Gln-207 contribute to the substrate site. Catalysis depends on Asp-248, which acts as the Proton donor. Residue Asn-258–Lys-259 coordinates substrate.

Belongs to the EIF-2B alpha/beta/delta subunits family. MtnA subfamily.

The enzyme catalyses 5-(methylsulfanyl)-alpha-D-ribose 1-phosphate = 5-(methylsulfanyl)-D-ribulose 1-phosphate. It carries out the reaction 5-deoxy-alpha-D-ribose 1-phosphate = 5-deoxy-D-ribulose 1-phosphate. Its pathway is amino-acid biosynthesis; L-methionine biosynthesis via salvage pathway; L-methionine from S-methyl-5-thio-alpha-D-ribose 1-phosphate: step 1/6. In terms of biological role, catalyzes the interconversion of methylthioribose-1-phosphate (MTR-1-P) into methylthioribulose-1-phosphate (MTRu-1-P). Also catalyzes the interconversion of 5-deoxyribose 1-phosphate and 5-deoxyribulose 1-phosphate. Part of a bifunctional DHAP-shunt salvage pathway for SAM by-products. In Rhodospirillum rubrum (strain ATCC 11170 / ATH 1.1.1 / DSM 467 / LMG 4362 / NCIMB 8255 / S1), this protein is Methylthioribose-1-phosphate isomerase.